Reading from the N-terminus, the 143-residue chain is Transcriptional regulator MraZ (143 aa).

2 SpoVT-AbrB domains span residues 5–47 (EYQH…PQEE) and 76–119 (ASEC…SKSE).

Belongs to the MraZ family. Forms oligomers.

The protein localises to the cytoplasm. It is found in the nucleoid. The chain is Transcriptional regulator MraZ from Listeria welshimeri serovar 6b (strain ATCC 35897 / DSM 20650 / CCUG 15529 / CIP 8149 / NCTC 11857 / SLCC 5334 / V8).